The following is a 196-amino-acid chain: Proteasome subunit beta (196 aa).

Position 1 (Met1) is a propeptide, removed in mature form; by autocatalysis. Residue Thr2 is the Nucleophile of the active site.

It belongs to the peptidase T1B family. In terms of assembly, the 20S proteasome core is composed of 14 alpha and 14 beta subunits that assemble into four stacked heptameric rings, resulting in a barrel-shaped structure. The two inner rings, each composed of seven catalytic beta subunits, are sandwiched by two outer rings, each composed of seven alpha subunits. The catalytic chamber with the active sites is on the inside of the barrel. Has a gated structure, the ends of the cylinder being occluded by the N-termini of the alpha-subunits. Is capped at one or both ends by the proteasome regulatory ATPase, PAN.

The protein localises to the cytoplasm. It carries out the reaction Cleavage of peptide bonds with very broad specificity.. The formation of the proteasomal ATPase PAN-20S proteasome complex, via the docking of the C-termini of PAN into the intersubunit pockets in the alpha-rings, triggers opening of the gate for substrate entry. Interconversion between the open-gate and close-gate conformations leads to a dynamic regulation of the 20S proteasome proteolysis activity. In terms of biological role, component of the proteasome core, a large protease complex with broad specificity involved in protein degradation. In Nanoarchaeum equitans (strain Kin4-M), this protein is Proteasome subunit beta.